Consider the following 1777-residue polypeptide: FERM and PDZ domain-containing protein 3 (1777 aa).

The PDZ domain maps to 21–98; it reads QVTVHRDPIY…FIVLTVLHTH (78 aa). Residues 147 to 461 enclose the FERM domain; sequence NVLKVFLENG…GYCRLLLDSR (315 aa). Disordered stretches follow at residues 491-520, 555-574, 622-697, 832-871, 1014-1216, 1309-1346, and 1732-1765; these read TGGH…TPPP, ETRP…QGYE, QLGP…GRHL, SLGR…QGER, SAPE…PFRL, RPQA…LSSP, and QQQQ…ATVM. Positions 502–511 are enriched in polar residues; the sequence is YVGSVGTSPR. Residues 555–564 show a composition bias toward basic and acidic residues; that stretch reads ETRPRTKSDP. A compositionally biased stretch (acidic residues) spans 649–659; that stretch reads SEEEEEEEDET. 4 stretches are compositionally biased toward polar residues: residues 840–850, 1015–1035, 1046–1056, and 1094–1111; these read PSLQPIATGQS, APET…SSPR, HLSQQEDSLPV, and LQKQ…QLES. A compositionally biased stretch (low complexity) spans 1134–1168; it reads QSPSCQSRSHSPSCQPHGHSPSSQSRGQSPSCQPR. Positions 1172–1202 are enriched in polar residues; it reads PLRSQAASRQVSTMPSRKLETTLNGAHSTSE. Positions 1732-1751 are enriched in low complexity; it reads QQQQQQQQQQQQVAAAAGAA.

The sequence is that of FERM and PDZ domain-containing protein 3 from Homo sapiens (Human).